Reading from the N-terminus, the 244-residue chain is Large ribosomal subunit protein uL3 (244 aa).

This sequence belongs to the universal ribosomal protein uL3 family. Part of the 50S ribosomal subunit. Forms a cluster with proteins L14 and L19.

Its function is as follows. One of the primary rRNA binding proteins, it binds directly near the 3'-end of the 23S rRNA, where it nucleates assembly of the 50S subunit. In Aquifex pyrophilus, this protein is Large ribosomal subunit protein uL3.